We begin with the raw amino-acid sequence, 100 residues long: NADH-quinone oxidoreductase subunit K (100 aa).

The next 3 membrane-spanning stretches (helical) occupy residues 4–24 (LTHGLILAAILFVLGLTGLVI), 28–48 (LLFMLIGLEIMINASALAFVV), and 60–80 (VMYILAISLAAAEASIGLALL).

Belongs to the complex I subunit 4L family. As to quaternary structure, NDH-1 is composed of 13 different subunits. Subunits NuoA, H, J, K, L, M, N constitute the membrane sector of the complex.

It localises to the cell inner membrane. The enzyme catalyses a quinone + NADH + 5 H(+)(in) = a quinol + NAD(+) + 4 H(+)(out). NDH-1 shuttles electrons from NADH, via FMN and iron-sulfur (Fe-S) centers, to quinones in the respiratory chain. The immediate electron acceptor for the enzyme in this species is believed to be ubiquinone. Couples the redox reaction to proton translocation (for every two electrons transferred, four hydrogen ions are translocated across the cytoplasmic membrane), and thus conserves the redox energy in a proton gradient. This chain is NADH-quinone oxidoreductase subunit K, found in Enterobacter sp. (strain 638).